The chain runs to 426 residues: Serine--tRNA ligase (426 aa).

Positions 44–67 are disordered; that stretch reads TEKQALQSERNATSKQIGMLKKKG. Residues 47–59 are compositionally biased toward polar residues; the sequence is QALQSERNATSKQ. 231–233 contacts L-serine; sequence TAE. Residues 262–264 and V278 contribute to the ATP site; that span reads RRE. Position 285 (E285) interacts with L-serine. 349 to 352 is an ATP binding site; it reads EVSS. Residue S384 coordinates L-serine.

It belongs to the class-II aminoacyl-tRNA synthetase family. Type-1 seryl-tRNA synthetase subfamily. Homodimer. The tRNA molecule binds across the dimer.

The protein resides in the cytoplasm. The catalysed reaction is tRNA(Ser) + L-serine + ATP = L-seryl-tRNA(Ser) + AMP + diphosphate + H(+). The enzyme catalyses tRNA(Sec) + L-serine + ATP = L-seryl-tRNA(Sec) + AMP + diphosphate + H(+). Its pathway is aminoacyl-tRNA biosynthesis; selenocysteinyl-tRNA(Sec) biosynthesis; L-seryl-tRNA(Sec) from L-serine and tRNA(Sec): step 1/1. Catalyzes the attachment of serine to tRNA(Ser). Is also able to aminoacylate tRNA(Sec) with serine, to form the misacylated tRNA L-seryl-tRNA(Sec), which will be further converted into selenocysteinyl-tRNA(Sec). The polypeptide is Serine--tRNA ligase (Akkermansia muciniphila (strain ATCC BAA-835 / DSM 22959 / JCM 33894 / BCRC 81048 / CCUG 64013 / CIP 107961 / Muc)).